Consider the following 150-residue polypeptide: Snaclec bothrojaracin subunit beta (150 aa).

The first 23 residues, 1–23 (MGRFIFVSFGLLVVFLSLSGTAA), serve as a signal peptide directing secretion. Cystine bridges form between cysteine 25-cysteine 36, cysteine 53-cysteine 146, and cysteine 123-cysteine 138. One can recognise a C-type lectin domain in the interval 32 to 147 (YEGSCYRVFE…CTKLEYFVCE (116 aa)).

This sequence belongs to the snaclec family. In terms of assembly, heterodimer of subunits alpha and beta; disulfide-linked. As to expression, expressed by the venom gland.

The protein resides in the secreted. Its function is as follows. This potent antithrombotic agent acts in a calcium-independent manner. Exerts its anticoagulant effect by two distinct mechanisms. It binds to activated thrombin through exosite 1, blocking fibrinogen clotting, platelet activation, factor V activation and other effects, and it interacts with prothrombin (F2), decreasing its proteolytic activation -especially in the presence of factor Va. In vivo, intravenous injection before thrombosis induction causes a significant decrease in thrombus weight. Furthermore, BJC shows a prolonged effect by remaining in the plasma bound to prothrombin for at least 12 hours. This chain is Snaclec bothrojaracin subunit beta, found in Bothrops jararaca (Jararaca).